The chain runs to 243 residues: Probable transcriptional regulatory protein BH0025 (243 aa).

The protein belongs to the TACO1 family.

It localises to the cytoplasm. The protein is Probable transcriptional regulatory protein BH0025 of Borrelia hermsii (strain HS1 / DAH).